Here is a 41-residue protein sequence, read N- to C-terminus: Photosystem II reaction center protein L (41 aa).

Residues 20–40 traverse the membrane as a helical segment; sequence SLYLGLLLVFVVGLLFSSYFL.

Belongs to the PsbL family. PSII is composed of 1 copy each of membrane proteins PsbA, PsbB, PsbC, PsbD, PsbE, PsbF, PsbH, PsbI, PsbJ, PsbK, PsbL, PsbM, PsbT, PsbX, PsbY, PsbZ, Psb30/Ycf12, peripheral proteins PsbO, CyanoQ (PsbQ), PsbU, PsbV and a large number of cofactors. It forms dimeric complexes.

Its subcellular location is the cellular thylakoid membrane. One of the components of the core complex of photosystem II (PSII). PSII is a light-driven water:plastoquinone oxidoreductase that uses light energy to abstract electrons from H(2)O, generating O(2) and a proton gradient subsequently used for ATP formation. It consists of a core antenna complex that captures photons, and an electron transfer chain that converts photonic excitation into a charge separation. This subunit is found at the monomer-monomer interface and is required for correct PSII assembly and/or dimerization. In Synechococcus sp. (strain JA-3-3Ab) (Cyanobacteria bacterium Yellowstone A-Prime), this protein is Photosystem II reaction center protein L.